Here is a 212-residue protein sequence, read N- to C-terminus: COP9 signalosome complex subunit 8 (212 aa).

A PCI domain is found at 26–193; it reads TSLSAYEEQA…KPVVTAPPKD (168 aa).

It belongs to the CSN8 family. Component of the COP9 signalosome (CSN) complex.

Its subcellular location is the cytoplasm. The protein resides in the nucleus. Functionally, component of the COP9 signalosome (CSN) complex that acts as an regulator of the ubiquitin (Ubl) conjugation pathway by mediating the deneddylation of the cullin subunit of SCF-type E3 ubiquitin-protein ligase complexes. The CSN complex seems to link protein degradation to sexual development. The polypeptide is COP9 signalosome complex subunit 8 (csnH) (Emericella nidulans (strain FGSC A4 / ATCC 38163 / CBS 112.46 / NRRL 194 / M139) (Aspergillus nidulans)).